The sequence spans 255 residues: Phosphoribosylformylglycinamidine synthase subunit PurQ (255 aa).

A Glutamine amidotransferase type-1 domain is found at 6–255 (TLILRTPGTN…TNAVKWARQV (250 aa)). The Nucleophile role is filled by cysteine 96. Residues histidine 217 and glutamate 219 contribute to the active site.

As to quaternary structure, part of the FGAM synthase complex composed of 1 PurL, 1 PurQ and 2 PurS subunits.

Its subcellular location is the cytoplasm. The catalysed reaction is N(2)-formyl-N(1)-(5-phospho-beta-D-ribosyl)glycinamide + L-glutamine + ATP + H2O = 2-formamido-N(1)-(5-O-phospho-beta-D-ribosyl)acetamidine + L-glutamate + ADP + phosphate + H(+). It carries out the reaction L-glutamine + H2O = L-glutamate + NH4(+). The protein operates within purine metabolism; IMP biosynthesis via de novo pathway; 5-amino-1-(5-phospho-D-ribosyl)imidazole from N(2)-formyl-N(1)-(5-phospho-D-ribosyl)glycinamide: step 1/2. Its function is as follows. Part of the phosphoribosylformylglycinamidine synthase complex involved in the purines biosynthetic pathway. Catalyzes the ATP-dependent conversion of formylglycinamide ribonucleotide (FGAR) and glutamine to yield formylglycinamidine ribonucleotide (FGAM) and glutamate. The FGAM synthase complex is composed of three subunits. PurQ produces an ammonia molecule by converting glutamine to glutamate. PurL transfers the ammonia molecule to FGAR to form FGAM in an ATP-dependent manner. PurS interacts with PurQ and PurL and is thought to assist in the transfer of the ammonia molecule from PurQ to PurL. This is Phosphoribosylformylglycinamidine synthase subunit PurQ from Dehalococcoides mccartyi (strain ATCC BAA-2266 / KCTC 15142 / 195) (Dehalococcoides ethenogenes (strain 195)).